The sequence spans 286 residues: Beta-lactamase SHV-1 (286 aa).

The N-terminal stretch at 1–21 is a signal peptide; it reads MRYIRLCIISLLATLPLAVHA. Ser-66 functions as the Acyl-ester intermediate in the catalytic mechanism. Cys-73 and Cys-119 are oxidised to a cystine. Catalysis depends on Glu-164, which acts as the Proton acceptor. 230–232 contacts substrate; sequence KTG.

It belongs to the class-A beta-lactamase family.

It carries out the reaction a beta-lactam + H2O = a substituted beta-amino acid. This is Beta-lactamase SHV-1 (bla) from Escherichia coli.